The sequence spans 482 residues: 6-phosphogluconate dehydrogenase, decarboxylating (482 aa).

Residues 17 to 22, 40 to 42, 82 to 84, and Asn110 each bind NADP(+); these read GLAVMG, NRS, and VKA. Substrate is bound by residues Asn110 and 136–138; that span reads SGG. Lys193 serves as the catalytic Proton acceptor. Position 196-197 (196-197) interacts with substrate; it reads HN. The Proton donor role is filled by Glu200. 5 residues coordinate substrate: Tyr201, Lys272, Arg299, Arg457, and His463.

This sequence belongs to the 6-phosphogluconate dehydrogenase family. As to quaternary structure, homodimer.

The catalysed reaction is 6-phospho-D-gluconate + NADP(+) = D-ribulose 5-phosphate + CO2 + NADPH. The protein operates within carbohydrate degradation; pentose phosphate pathway; D-ribulose 5-phosphate from D-glucose 6-phosphate (oxidative stage): step 3/3. Catalyzes the oxidative decarboxylation of 6-phosphogluconate to ribulose 5-phosphate and CO(2), with concomitant reduction of NADP to NADPH. This chain is 6-phosphogluconate dehydrogenase, decarboxylating (gnd), found in Synechocystis sp. (strain ATCC 27184 / PCC 6803 / Kazusa).